The following is a 330-amino-acid chain: uncharacterized protein (330 aa).

The next 10 membrane-spanning stretches (helical) occupy residues 15-35 (LTLIAPFFLWGTAMVAMKGVL), 41-61 (FFVATVRLIPAGILVLLWAMG), 72-92 (GWGWIILFALVDGTLFQGFLA), 102-122 (LGSVIIDSQPIAVALLSSWLF), 125-145 (VIGGIGWLGLLLGVGGISLIG), 175-195 (LWMLLASLSMAVGTVLIPFVS), 201-221 (VVATGWHMIIGGLPLLAIALV), 238-258 (LAYATVFGSAIAYGIFFYLAS), 264-284 (SLSSLTFLTPIFALSFSNLIL), and 286-306 (EQLSSLQWLGVAFTLVSIYLI). 2 consecutive EamA domains span residues 22-146 (FLWG…LIGL) and 182-308 (LSMA…LINQ).

It belongs to the EamA transporter family.

Its subcellular location is the cell membrane. This is an uncharacterized protein from Synechocystis sp. (strain ATCC 27184 / PCC 6803 / Kazusa).